Here is a 492-residue protein sequence, read N- to C-terminus: 3-ketoacyl-CoA synthase 5 (492 aa).

Transmembrane regions (helical) follow at residues 20 to 40 (LINN…AIEL) and 59 to 79 (LLHI…YFMS). The region spanning 76-365 (YFMSKPRTVY…FLSSLIGRKI (290 aa)) is the FAE domain. Active-site residues include Cys-220, His-299, His-383, His-387, His-416, and Asn-420.

It belongs to the thiolase-like superfamily. Chalcone/stilbene synthases family. As to expression, expressed in siliques, flowers, leaves and seedlings.

Its subcellular location is the membrane. It catalyses the reaction a very-long-chain acyl-CoA + malonyl-CoA + H(+) = a very-long-chain 3-oxoacyl-CoA + CO2 + CoA. The protein operates within lipid metabolism; fatty acid biosynthesis. Inhibited by K3 herbicides such as alachlor, allidochlor, anilofos, cafenstrole and flufenacet. Strongly inhibited by metazachlor and mefluidide. In terms of biological role, mediates mostly the synthesis of VLCFAs from 26 to 30 carbons in length (e.g. C20:1, C26, C28, C30). The chain is 3-ketoacyl-CoA synthase 5 from Arabidopsis thaliana (Mouse-ear cress).